Consider the following 127-residue polypeptide: Fluoride-specific ion channel FluC (127 aa).

4 consecutive transmembrane segments (helical) span residues 4-24 (PILAIALGSTLGGLLRWGLGL), 36-56 (GTLVANLIAGYVVGVAIAFFA), 68-88 (LVITGFCGGLSTFSTFSAEIV), and 98-118 (WAMSAIAVHVAGSLIMTLAGI). Residues glycine 75 and serine 78 each contribute to the Na(+) site.

The protein belongs to the fluoride channel Fluc/FEX (TC 1.A.43) family.

Its subcellular location is the cell inner membrane. The catalysed reaction is fluoride(in) = fluoride(out). With respect to regulation, na(+) is not transported, but it plays an essential structural role and its presence is essential for fluoride channel function. Its function is as follows. Fluoride-specific ion channel. Important for reducing fluoride concentration in the cell, thus reducing its toxicity. The protein is Fluoride-specific ion channel FluC of Nitrosomonas europaea (strain ATCC 19718 / CIP 103999 / KCTC 2705 / NBRC 14298).